The following is a 175-amino-acid chain: Mitochondrial inner membrane protease subunit 2 (175 aa).

A helical transmembrane segment spans residues 19 to 37 (FFVAVPVAVTFLDRVACVA). Active-site residues include serine 43 and lysine 91.

The protein belongs to the peptidase S26 family. IMP2 subfamily. As to quaternary structure, heterodimer of 2 subunits, IMMPL1 and IMMPL2. In terms of tissue distribution, expressed in all tissues tested except adult liver and lung.

The protein resides in the mitochondrion inner membrane. In terms of biological role, catalyzes the removal of transit peptides required for the targeting of proteins from the mitochondrial matrix, across the inner membrane, into the inter-membrane space. Known to process the nuclear encoded protein DIABLO. This chain is Mitochondrial inner membrane protease subunit 2 (IMMP2L), found in Homo sapiens (Human).